We begin with the raw amino-acid sequence, 328 residues long: Probable E3 ubiquitin-protein ligase RHC1A (328 aa).

Ser-2 carries the post-translational modification N-acetylserine. Residues 190 to 231 (CPVCKDEFELGSEAKQMPCNHIYHSDCIVPWLVQHNSCPVCR) form an RING-type; atypical zinc finger. The tract at residues 233-324 (ELPSASGPSS…QQSYMGYSGW (92 aa)) is disordered. Polar residues predominate over residues 238–250 (SGPSSSQNRTTPT). 2 stretches are compositionally biased toward low complexity: residues 251 to 266 (RNYR…NSRE) and 275 to 290 (FSSF…SSSS). Polar residues predominate over residues 291 to 300 (TQNRGGTRNS).

It carries out the reaction S-ubiquitinyl-[E2 ubiquitin-conjugating enzyme]-L-cysteine + [acceptor protein]-L-lysine = [E2 ubiquitin-conjugating enzyme]-L-cysteine + N(6)-ubiquitinyl-[acceptor protein]-L-lysine.. It functions in the pathway protein modification; protein ubiquitination. In terms of biological role, probable E3 ubiquitin-protein ligase that may possess E3 ubiquitin ligase activity in vitro. The chain is Probable E3 ubiquitin-protein ligase RHC1A from Arabidopsis thaliana (Mouse-ear cress).